Reading from the N-terminus, the 97-residue chain is Large ribosomal subunit protein eL21 (97 aa).

A disordered region spans residues 1-26 (MQKSEGFRSKTRYKLQKHPRQKGMAP). The span at 9 to 21 (SKTRYKLQKHPRQ) shows a compositional bias: basic residues.

This sequence belongs to the eukaryotic ribosomal protein eL21 family.

This Methanococcus maripaludis (strain C5 / ATCC BAA-1333) protein is Large ribosomal subunit protein eL21.